Reading from the N-terminus, the 523-residue chain is Putative F-box protein At1g30925 (523 aa).

The F-box domain occupies 4–44 (FPNDDLVYEILLRLPAKSVARCSCVSKLRRSILSRQDFTEL).

This chain is Putative F-box protein At1g30925, found in Arabidopsis thaliana (Mouse-ear cress).